We begin with the raw amino-acid sequence, 235 residues long: ATP synthase subunit a (235 aa).

Helical transmembrane passes span 17-37 (TTNI…LYGM), 76-96 (SFFA…GLIF), 113-133 (PVVT…AGVA), 179-201 (LLMS…PGLF), and 211-230 (VFIG…VYIS).

It belongs to the ATPase A chain family. In terms of assembly, F-type ATPases have 2 components, CF(1) - the catalytic core - and CF(0) - the membrane proton channel. CF(1) has five subunits: alpha(3), beta(3), gamma(1), delta(1), epsilon(1). CF(0) has three main subunits: a(1), b(2) and c(9-12). The alpha and beta chains form an alternating ring which encloses part of the gamma chain. CF(1) is attached to CF(0) by a central stalk formed by the gamma and epsilon chains, while a peripheral stalk is formed by the delta and b chains.

It localises to the cell membrane. Its function is as follows. Key component of the proton channel; it plays a direct role in the translocation of protons across the membrane. The polypeptide is ATP synthase subunit a (Limosilactobacillus reuteri subsp. reuteri (strain JCM 1112) (Lactobacillus reuteri)).